The sequence spans 252 residues: Triosephosphate isomerase (252 aa).

Residue 9-11 (NWK) participates in substrate binding. Histidine 95 (electrophile) is an active-site residue. Residue glutamate 167 is the Proton acceptor of the active site. Residues glycine 173, serine 213, and 234–235 (GG) each bind substrate.

It belongs to the triosephosphate isomerase family. In terms of assembly, homodimer.

The protein localises to the cytoplasm. It catalyses the reaction D-glyceraldehyde 3-phosphate = dihydroxyacetone phosphate. Its pathway is carbohydrate biosynthesis; gluconeogenesis. It functions in the pathway carbohydrate degradation; glycolysis; D-glyceraldehyde 3-phosphate from glycerone phosphate: step 1/1. In terms of biological role, involved in the gluconeogenesis. Catalyzes stereospecifically the conversion of dihydroxyacetone phosphate (DHAP) to D-glyceraldehyde-3-phosphate (G3P). In Syntrophotalea carbinolica (strain DSM 2380 / NBRC 103641 / GraBd1) (Pelobacter carbinolicus), this protein is Triosephosphate isomerase.